A 327-amino-acid chain; its full sequence is Aspartate--ammonia ligase (327 aa).

Belongs to the class-II aminoacyl-tRNA synthetase family. AsnA subfamily.

Its subcellular location is the cytoplasm. The enzyme catalyses L-aspartate + NH4(+) + ATP = L-asparagine + AMP + diphosphate + H(+). It participates in amino-acid biosynthesis; L-asparagine biosynthesis; L-asparagine from L-aspartate (ammonia route): step 1/1. The sequence is that of Aspartate--ammonia ligase from Bacillus cereus (strain B4264).